We begin with the raw amino-acid sequence, 529 residues long: Corneodesmosin (529 aa).

The N-terminal stretch at 1-32 (MGSSRAPWMGRVGGHGMMALLLAGLLLPGTLA) is a signal peptide. Disordered regions lie at residues 38–248 (FSDP…SVSG) and 383–492 (GSTG…SSAG). Composition is skewed to low complexity over residues 58–83 (GKGD…SARS), 90–100 (GSSSGSSIAQG), 111–175 (GYSQ…NGSA), 189–231 (PSQP…SGGP), 392–408 (SPSS…SSSS), and 426–441 (PGTG…QSSG). A glycan (N-linked (GlcNAc...) asparagine) is linked at asparagine 172. Residues 449–467 (GSKSSSSGHPCMSVSSLTL) show a composition bias toward polar residues.

It localises to the secreted. Functionally, important for the epidermal barrier integrity. This Pan troglodytes (Chimpanzee) protein is Corneodesmosin (CDSN).